Consider the following 114-residue polypeptide: Large ribosomal subunit protein uL18 (114 aa).

The protein belongs to the universal ribosomal protein uL18 family. In terms of assembly, part of the 50S ribosomal subunit; part of the 5S rRNA/L5/L18/L25 subcomplex. Contacts the 23S rRNA. Contacts protein L27 and the 5S rRNA.

This is one of the proteins that bind and probably mediate the attachment of the 5S RNA into the large ribosomal subunit, where it forms part of the central protuberance. The chain is Large ribosomal subunit protein uL18 (rplR) from Deinococcus radiodurans (strain ATCC 13939 / DSM 20539 / JCM 16871 / CCUG 27074 / LMG 4051 / NBRC 15346 / NCIMB 9279 / VKM B-1422 / R1).